The following is an 89-amino-acid chain: Small ribosomal subunit protein uS15 (89 aa).

A disordered region spans residues 1–22 (MPLSKEQKQEVMEKYKLHEHDT).

This sequence belongs to the universal ribosomal protein uS15 family. As to quaternary structure, part of the 30S ribosomal subunit. Forms a bridge to the 50S subunit in the 70S ribosome, contacting the 23S rRNA.

One of the primary rRNA binding proteins, it binds directly to 16S rRNA where it helps nucleate assembly of the platform of the 30S subunit by binding and bridging several RNA helices of the 16S rRNA. Functionally, forms an intersubunit bridge (bridge B4) with the 23S rRNA of the 50S subunit in the ribosome. The protein is Small ribosomal subunit protein uS15 of Natranaerobius thermophilus (strain ATCC BAA-1301 / DSM 18059 / JW/NM-WN-LF).